A 219-amino-acid chain; its full sequence is 2-C-methyl-D-erythritol 4-phosphate cytidylyltransferase (219 aa).

This sequence belongs to the IspD/TarI cytidylyltransferase family. IspD subfamily.

The catalysed reaction is 2-C-methyl-D-erythritol 4-phosphate + CTP + H(+) = 4-CDP-2-C-methyl-D-erythritol + diphosphate. It participates in isoprenoid biosynthesis; isopentenyl diphosphate biosynthesis via DXP pathway; isopentenyl diphosphate from 1-deoxy-D-xylulose 5-phosphate: step 2/6. Its function is as follows. Catalyzes the formation of 4-diphosphocytidyl-2-C-methyl-D-erythritol from CTP and 2-C-methyl-D-erythritol 4-phosphate (MEP). The polypeptide is 2-C-methyl-D-erythritol 4-phosphate cytidylyltransferase (Endomicrobium trichonymphae).